We begin with the raw amino-acid sequence, 126 residues long: Protein LiaI (126 aa).

Helical transmembrane passes span 11–31 (FLLIVFGISVFFGGGSFGFII) and 56–76 (IIVGGIGAIMLICSLPFVVGI).

Its subcellular location is the cell membrane. The polypeptide is Protein LiaI (liaI) (Bacillus subtilis (strain 168)).